The primary structure comprises 303 residues: Tumor necrosis factor receptor type 1-associated DEATH domain protein (303 aa).

The Nuclear export signal signature appears at 141-157 (QKDDELAEIDERLKSIK). Positions 208–298 (TSAHIQHFAK…SIALDLLSLN (91 aa)) constitute a Death domain. A Nuclear localization signal motif is present at residues 224 to 237 (KPVGRSLGKTCRAL).

Heterodimer with tnfrsf1a.

The protein resides in the nucleus. The protein localises to the cytoplasm. It is found in the cytoskeleton. Its function is as follows. Adapter molecule for tnfrsf1a that specifically associates with the cytoplasmic domain of activated tnfrsf1a mediating its interaction with fadd. The sequence is that of Tumor necrosis factor receptor type 1-associated DEATH domain protein from Xenopus laevis (African clawed frog).